The chain runs to 428 residues: Enolase 3 (428 aa).

Glutamine 163 provides a ligand contact to (2R)-2-phosphoglycerate. Glutamate 205 functions as the Proton donor in the catalytic mechanism. Aspartate 242, glutamate 286, and aspartate 313 together coordinate Mg(2+). The (2R)-2-phosphoglycerate site is built by lysine 338, arginine 367, serine 368, and lysine 389. Lysine 338 (proton acceptor) is an active-site residue.

The protein belongs to the enolase family. The cofactor is Mg(2+).

The protein localises to the cytoplasm. Its subcellular location is the secreted. The protein resides in the cell surface. It carries out the reaction (2R)-2-phosphoglycerate = phosphoenolpyruvate + H2O. The protein operates within carbohydrate degradation; glycolysis; pyruvate from D-glyceraldehyde 3-phosphate: step 4/5. Its function is as follows. Catalyzes the reversible conversion of 2-phosphoglycerate (2-PG) into phosphoenolpyruvate (PEP). It is essential for the degradation of carbohydrates via glycolysis. This chain is Enolase 3, found in Lactobacillus johnsonii (strain CNCM I-12250 / La1 / NCC 533).